The chain runs to 70 residues: MLNPSIDSLLTKIDSKYTLVTVAAKRAREMQLANNCVVEKPVSHKCVGKALEEIDMEALSYVPSEDKVTE.

Belongs to the RNA polymerase subunit omega family. In terms of assembly, the RNAP catalytic core consists of 2 alpha, 1 beta, 1 beta' and 1 omega subunit. When a sigma factor is associated with the core the holoenzyme is formed, which can initiate transcription.

The enzyme catalyses RNA(n) + a ribonucleoside 5'-triphosphate = RNA(n+1) + diphosphate. Its function is as follows. Promotes RNA polymerase assembly. Latches the N- and C-terminal regions of the beta' subunit thereby facilitating its interaction with the beta and alpha subunits. The polypeptide is DNA-directed RNA polymerase subunit omega (Bacillus anthracis).